Reading from the N-terminus, the 670-residue chain is UvrABC system protein B (670 aa).

Positions 51-433 (EGLKKREQFQ…SARIVEQIIR (383 aa)) constitute a Helicase ATP-binding domain. An ATP-binding site is contributed by 64 to 71 (GVTGSGKT). The short motif at 117-140 (YYDYYQPESYLPAKDQYIEKDAQI) is the Beta-hairpin element. Residues 453 to 612 (DVMQEIRKIV…IVPKTIRKPI (160 aa)) enclose the Helicase C-terminal domain. The 36-residue stretch at 631 to 666 (PNVIIELDAEMREAADRLDFERAIQLRELIKKLEKE) folds into the UVR domain.

The protein belongs to the UvrB family. Forms a heterotetramer with UvrA during the search for lesions. Interacts with UvrC in an incision complex.

It localises to the cytoplasm. Its function is as follows. The UvrABC repair system catalyzes the recognition and processing of DNA lesions. A damage recognition complex composed of 2 UvrA and 2 UvrB subunits scans DNA for abnormalities. Upon binding of the UvrA(2)B(2) complex to a putative damaged site, the DNA wraps around one UvrB monomer. DNA wrap is dependent on ATP binding by UvrB and probably causes local melting of the DNA helix, facilitating insertion of UvrB beta-hairpin between the DNA strands. Then UvrB probes one DNA strand for the presence of a lesion. If a lesion is found the UvrA subunits dissociate and the UvrB-DNA preincision complex is formed. This complex is subsequently bound by UvrC and the second UvrB is released. If no lesion is found, the DNA wraps around the other UvrB subunit that will check the other stand for damage. In Methanosarcina acetivorans (strain ATCC 35395 / DSM 2834 / JCM 12185 / C2A), this protein is UvrABC system protein B.